Reading from the N-terminus, the 244-residue chain is Secreted RxLR effector protein RXLR-C05 (244 aa).

The first 21 residues, 1-21 (MRGAFYVATAFLIASSTRTAA), serve as a signal peptide directing secretion. Positions 37-46 (LPVGDSDTKS) are enriched in basic and acidic residues. Positions 37–56 (LPVGDSDTKSLPRRSLKGSG) are disordered. Residues 50–68 (RSLKGSGDRLEIPVAEEER) carry the RxLR-dEER motif.

The protein belongs to the RxLR effector family.

Its subcellular location is the secreted. It is found in the host cytoplasm. The protein localises to the host nucleus. Functionally, secreted effector that suppresses pattern-triggered immunity (PTI) in plant host. The chain is Secreted RxLR effector protein RXLR-C05 from Plasmopara halstedii (Downy mildew of sunflower).